The following is a 421-amino-acid chain: Protein PHLOEM UNLOADING MODULATOR (421 aa).

7 consecutive transmembrane segments (helical) span residues 30–50 (LMPVLWSVLAIAVVTRVLFYK), 60–80 (IPFLGSIVFLLCALLFEALCV), 124–144 (HIIGLHHFLMLFIMLGFSVVF), 158–178 (YIFTMGVGRLLRAITFVSTIL), 286–306 (AMAWTEAYGGFSSAMIWLFVA), 323–343 (CIVAIYVGILLWKMTGFIWSA), and 397–417 (TVFACATVITTLTIVILALTL).

It belongs to the sphingomyelin synthase family.

It localises to the membrane. Its pathway is sphingolipid metabolism. Catalyzes the biosynthesis of sphingolipids with very long-chain fatty acid (VLCFA). Required for the formation of plasmodesmal cytoplasmic sleeve during the transition from type I to type II plasmodesmata to modulate post-sieve elements (SE) unloading and symplastic cell-to-cell molecular trafficking at the phloem pole pericycle (PPP)-endodermis interface in roots. The chain is Protein PHLOEM UNLOADING MODULATOR from Arabidopsis thaliana (Mouse-ear cress).